The following is a 356-amino-acid chain: MTTPEDIIRRDVLAMTGYPVPDATGFVKLDAMENPYSLPAPLAAELGERLAHVALNRYPAPRPAALIDRLRAVTGVPAACDVLLGNGSDELISMLAMACAKPGAKVLAPVPGFVMYELSAKFAQLEFVGVPLRADLTLDIDAMLAALAEHRPALVYLAYPNNPTGTLYPDEDVERIIAAAAASLVVIDEAYQPFAQRSWLPRAAQFDNVVVMRTMSKLGLAGIRLGYLVGLPAWLVQFDKVRPPYNVNVLTQAAAEFLLERVDVLDAQAAQLRDARTALAHAIGALPGATVFPSAGNFLLVRVPDAAAVFDVLLTERVLIKNVSKMHPLLANCVRVTVGSPEENARLLAALKLALP.

Lys217 is subject to N6-(pyridoxal phosphate)lysine.

This sequence belongs to the class-II pyridoxal-phosphate-dependent aminotransferase family. Histidinol-phosphate aminotransferase subfamily. Homodimer. The cofactor is pyridoxal 5'-phosphate.

The catalysed reaction is L-histidinol phosphate + 2-oxoglutarate = 3-(imidazol-4-yl)-2-oxopropyl phosphate + L-glutamate. It participates in amino-acid biosynthesis; L-histidine biosynthesis; L-histidine from 5-phospho-alpha-D-ribose 1-diphosphate: step 7/9. This is Histidinol-phosphate aminotransferase 2 from Burkholderia pseudomallei (strain 1710b).